We begin with the raw amino-acid sequence, 393 residues long: Formate-dependent phosphoribosylglycinamide formyltransferase (393 aa).

Residues E22–L23 and E82 each bind N(1)-(5-phospho-beta-D-ribosyl)glycinamide. ATP is bound by residues R114, K155, S160–Q165, E195–I198, and E203. The ATP-grasp domain maps to R119–L308. Residues E267 and E279 each contribute to the Mg(2+) site. N(1)-(5-phospho-beta-D-ribosyl)glycinamide-binding positions include D286, K356, and R363–R364.

The protein belongs to the PurK/PurT family. In terms of assembly, homodimer.

It catalyses the reaction N(1)-(5-phospho-beta-D-ribosyl)glycinamide + formate + ATP = N(2)-formyl-N(1)-(5-phospho-beta-D-ribosyl)glycinamide + ADP + phosphate + H(+). It functions in the pathway purine metabolism; IMP biosynthesis via de novo pathway; N(2)-formyl-N(1)-(5-phospho-D-ribosyl)glycinamide from N(1)-(5-phospho-D-ribosyl)glycinamide (formate route): step 1/1. Functionally, involved in the de novo purine biosynthesis. Catalyzes the transfer of formate to 5-phospho-ribosyl-glycinamide (GAR), producing 5-phospho-ribosyl-N-formylglycinamide (FGAR). Formate is provided by PurU via hydrolysis of 10-formyl-tetrahydrofolate. The polypeptide is Formate-dependent phosphoribosylglycinamide formyltransferase (Pseudomonas entomophila (strain L48)).